A 352-amino-acid polypeptide reads, in one-letter code: Ion-translocating oxidoreductase complex subunit D (352 aa).

A run of 4 helical transmembrane segments spans residues 20 to 40 (IMLL…WFFG), 42 to 62 (GTLV…ALVL), 89 to 109 (IPPL…AIIA), and 123 to 143 (PAMI…TSWL). Threonine 187 carries the post-translational modification FMN phosphoryl threonine. 5 consecutive transmembrane segments (helical) span residues 214-234 (ILAG…GLWL), 242-262 (WHIP…GWLF), 267-287 (LAAP…FFIL), 301-321 (LIFG…GGYP), and 322-342 (DGVA…DYYT).

Belongs to the NqrB/RnfD family. The complex is composed of six subunits: RsxA, RsxB, RsxC, RsxD, RsxE and RsxG. FMN serves as cofactor.

It is found in the cell inner membrane. Its function is as follows. Part of a membrane-bound complex that couples electron transfer with translocation of ions across the membrane. Required to maintain the reduced state of SoxR. The sequence is that of Ion-translocating oxidoreductase complex subunit D from Escherichia coli (strain ATCC 8739 / DSM 1576 / NBRC 3972 / NCIMB 8545 / WDCM 00012 / Crooks).